A 629-amino-acid polypeptide reads, in one-letter code: ATP-dependent DNA helicase II subunit 2 (629 aa).

The Ku domain maps to 254 to 476 (SGLNRKTAVE…GHQIDELMEQ (223 aa)). The segment covering 608–620 (DLETLLKRGEQHS) has biased composition (basic and acidic residues). The segment at 608 to 629 (DLETLLKRGEQHSRGSPNNSNN) is disordered.

This sequence belongs to the ku80 family. Heterodimer of YKU70/HDF1 and YKU80/HDF2. Interacts with SIR4.

It localises to the nucleus. It is found in the chromosome. Its subcellular location is the telomere. It carries out the reaction ATP + H2O = ADP + phosphate + H(+). Single-stranded DNA-dependent ATP-dependent helicase. Involved in non-homologous end joining (NHEJ) DNA double strand break repair. DNA-binding is sequence-independent but has a high affinity to nicks in double-stranded DNA and to the ends of duplex DNA. Binds to naturally occurring chromosomal ends, and therefore provides chromosomal end protection. Appears to have a role in recruitment of telomerase and CDC13 to the telomere and the subsequent telomere elongation. Required also for telomere recombination to repair telomeric ends in the absence of telomerase. KU70, of the KU70/KU80 heterodimer, binds to the stem loop of TLC1, the RNA component of telomerase. Involved in telomere maintenance. Interacts with telomeric repeats and subtelomeric sequences thereby controlling telomere length and protecting against subtelomeric rearrangement. Maintains telomeric chromatin, which is involved in silencing the expression of genes located at the telomere. Required for mating-type switching. The polypeptide is ATP-dependent DNA helicase II subunit 2 (YKU80) (Saccharomyces cerevisiae (strain ATCC 204508 / S288c) (Baker's yeast)).